Consider the following 407-residue polypeptide: Phosphopentomutase (407 aa).

Mn(2+) contacts are provided by D10, D306, H311, D347, H348, and H359.

It belongs to the phosphopentomutase family. It depends on Mn(2+) as a cofactor.

The protein localises to the cytoplasm. It catalyses the reaction 2-deoxy-alpha-D-ribose 1-phosphate = 2-deoxy-D-ribose 5-phosphate. It carries out the reaction alpha-D-ribose 1-phosphate = D-ribose 5-phosphate. It functions in the pathway carbohydrate degradation; 2-deoxy-D-ribose 1-phosphate degradation; D-glyceraldehyde 3-phosphate and acetaldehyde from 2-deoxy-alpha-D-ribose 1-phosphate: step 1/2. Its function is as follows. Isomerase that catalyzes the conversion of deoxy-ribose 1-phosphate (dRib-1-P) and ribose 1-phosphate (Rib-1-P) to deoxy-ribose 5-phosphate (dRib-5-P) and ribose 5-phosphate (Rib-5-P), respectively. This Salmonella paratyphi A (strain AKU_12601) protein is Phosphopentomutase.